We begin with the raw amino-acid sequence, 331 residues long: Ferrochelatase (331 aa).

Fe cation is bound by residues H187 and E286.

The protein belongs to the ferrochelatase family.

It is found in the cytoplasm. It carries out the reaction heme b + 2 H(+) = protoporphyrin IX + Fe(2+). It functions in the pathway porphyrin-containing compound metabolism; protoheme biosynthesis; protoheme from protoporphyrin-IX: step 1/1. Functionally, catalyzes the ferrous insertion into protoporphyrin IX. The sequence is that of Ferrochelatase from Legionella pneumophila subsp. pneumophila (strain Philadelphia 1 / ATCC 33152 / DSM 7513).